A 316-amino-acid polypeptide reads, in one-letter code: MTVIGNHEVVGMEGAPRLSEASARDYFELLKPRVMSLVVFTAFAGLVLAPGHINPFIGFTAILCIAIGAGASGALNMWYDADIDAVMSRTAKRPIPAGKILPQEALAFGLTLSAFSVIILGLAVHWLAAGLLAFTIFFYVAIYTMWLKRSTPQNIVIGGAAGAFPPMIGWACVTGGVSVESIVLFLIIFLWTPAHFWALALFKMGDYGAVGVPMMPNVCGEATTKRQIVIYAVLTAVSGVCPTLLGFASLGYGAFATVMGLGFVWYSLGVLRMPEGDKRMVPAKKLFAFSIAYLFAIFSALLVDYAIARIWLGGIV.

9 helical membrane passes run 34 to 54 (VMSL…GHIN), 55 to 75 (PFIG…SGAL), 95 to 115 (IPAG…LSAF), 118 to 138 (IILG…TIFF), 155 to 175 (IVIG…CVTG), 182 to 202 (IVLF…LALF), 228 to 250 (IVIY…FASL), 254 to 273 (AFAT…VLRM), and 287 to 307 (FAFS…DYAI).

It belongs to the UbiA prenyltransferase family. Protoheme IX farnesyltransferase subfamily.

The protein resides in the cell inner membrane. The catalysed reaction is heme b + (2E,6E)-farnesyl diphosphate + H2O = Fe(II)-heme o + diphosphate. The protein operates within porphyrin-containing compound metabolism; heme O biosynthesis; heme O from protoheme: step 1/1. Its function is as follows. Converts heme B (protoheme IX) to heme O by substitution of the vinyl group on carbon 2 of heme B porphyrin ring with a hydroxyethyl farnesyl side group. In Rhizobium meliloti (strain 1021) (Ensifer meliloti), this protein is Protoheme IX farnesyltransferase.